A 49-amino-acid chain; its full sequence is Large ribosomal subunit protein bL33B (49 aa).

The protein belongs to the bacterial ribosomal protein bL33 family.

This is Large ribosomal subunit protein bL33B from Bacillus velezensis (strain DSM 23117 / BGSC 10A6 / LMG 26770 / FZB42) (Bacillus amyloliquefaciens subsp. plantarum).